A 282-amino-acid chain; its full sequence is MHIRIGTRSSKLAMIQAMMVKDRLDSLGIETEVKGFTSKGDINLDSPLYSIGGTGVFVDDLNRMILKNEIDIAVHSAKDIPSFIDDSLEISAVLKRDDPRDVLISQHSLNDLEASSVIGTSSLRRIKELKTLRNDILIKDLRGNIDTRLKKLDNGDYDGIIMAKAAYDRMRINRRHFILNYDDFVPAPNQGIIAIISKKDSEINDVLKKINDDETYNDMKAERLILSGLNLGCSKPVGIYAHKNRIFMRFYSLKNDDYKDIVMDYNNIDLEFIRSEIHDYGY.

Position 233 is an S-(dipyrrolylmethanemethyl)cysteine (C233).

The protein belongs to the HMBS family. It depends on dipyrromethane as a cofactor.

It carries out the reaction 4 porphobilinogen + H2O = hydroxymethylbilane + 4 NH4(+). The protein operates within porphyrin-containing compound metabolism; protoporphyrin-IX biosynthesis; coproporphyrinogen-III from 5-aminolevulinate: step 2/4. In terms of biological role, tetrapolymerization of the monopyrrole PBG into the hydroxymethylbilane pre-uroporphyrinogen in several discrete steps. This chain is Probable porphobilinogen deaminase, found in Picrophilus torridus (strain ATCC 700027 / DSM 9790 / JCM 10055 / NBRC 100828 / KAW 2/3).